We begin with the raw amino-acid sequence, 195 residues long: GRF1-interacting factor 2 (195 aa).

Residues 166-195 form a disordered region; it reads QQPETGLGGNVGLRGGKQDGADGQGKDDGK. A compositionally biased stretch (gly residues) spans 171-180; that stretch reads GLGGNVGLRG. The segment covering 181-195 has biased composition (basic and acidic residues); it reads GKQDGADGQGKDDGK.

It belongs to the SS18 family. Interacts with GRF1. Predominantly expressed in shoot tips containing the shoot apical meristem (SAM) and flower buds. Also expressed in mature flowers.

Functionally, transcription coactivator that plays a role in the regulation of cell expansion in leaf and cotyledons tissues. Component of a network formed by miR396, the GRFs and their interacting factors (GIFs) acting in the regulation of meristem function, at least partially through the control of cell proliferation. GIFs are involved in the positive regulation of cell proliferation of lateral organs in a functionally redundant manner. The chain is GRF1-interacting factor 2 (GIF2) from Arabidopsis thaliana (Mouse-ear cress).